We begin with the raw amino-acid sequence, 139 residues long: Translation initiation factor 2 subunit beta (139 aa).

Belongs to the eIF-2-beta/eIF-5 family. Heterotrimer composed of an alpha, a beta and a gamma chain.

In terms of biological role, eIF-2 functions in the early steps of protein synthesis by forming a ternary complex with GTP and initiator tRNA. The chain is Translation initiation factor 2 subunit beta from Nanoarchaeum equitans (strain Kin4-M).